Reading from the N-terminus, the 101-residue chain is Protein Tat (101 aa).

The segment at Met1–Asn24 is interaction with human CREBBP. The segment at Met1–Gly48 is transactivation. 3 residues coordinate Zn(2+): Cys22, Cys25, and Cys27. Positions Cys22–Cys37 are cysteine-rich. Lys28 is modified (N6-acetyllysine; by host PCAF). Cys30, His33, Cys34, and Cys37 together coordinate Zn(2+). A core region spans residues Phe38–Gly48. The span at Gly48 to Arg57 shows a compositional bias: basic residues. Positions Gly48–Asp101 are disordered. Positions Arg49–Arg57 match the Nuclear localization signal, RNA-binding (TAR), and protein transduction motif. The tract at residues Arg49–Glu86 is interaction with the host capping enzyme RNGTT. N6-acetyllysine; by host EP300 and GCN5L2 occurs at positions 50 and 51. Asymmetric dimethylarginine; by host PRMT6 is present on residues Arg52 and Arg53. A compositionally biased stretch (polar residues) spans Gln60–Gly79. A Glycyl lysine isopeptide (Lys-Gly) (interchain with G-Cter in ubiquitin) cross-link involves residue Lys71. Residues Arg78–Asp80 carry the Cell attachment site motif. Residues Glu86–Asp101 are compositionally biased toward basic and acidic residues.

This sequence belongs to the lentiviruses Tat family. In terms of assembly, interacts with host CCNT1. Associates with the P-TEFb complex composed at least of Tat, P-TEFb (CDK9 and CCNT1), TAR RNA, RNA Pol II. Recruits the HATs CREBBP, TAF1/TFIID, EP300, PCAF and GCN5L2. Interacts with host KAT5/Tip60; this interaction targets the latter to degradation. Interacts with the host deacetylase SIRT1. Interacts with host capping enzyme RNGTT; this interaction stimulates RNGTT. Binds to host KDR, and to the host integrins ITGAV/ITGB3 and ITGA5/ITGB1. Interacts with host KPNB1/importin beta-1 without previous binding to KPNA1/importin alpha-1. Interacts with EIF2AK2. Interacts with host nucleosome assembly protein NAP1L1; this interaction may be required for the transport of Tat within the nucleus, since the two proteins interact at the nuclear rim. Interacts with host C1QBP/SF2P32; this interaction involves lysine-acetylated Tat. Interacts with the host chemokine receptors CCR2, CCR3 and CXCR4. Interacts with host DPP4/CD26; this interaction may trigger an anti-proliferative effect. Interacts with host LDLR. Interacts with the host extracellular matrix metalloproteinase MMP1. Interacts with host PRMT6; this interaction mediates Tat's methylation. Interacts with, and is ubiquitinated by MDM2/Hdm2. Interacts with host PSMC3 and HTATIP2. Interacts with STAB1; this interaction may overcome SATB1-mediated repression of IL2 and IL2RA (interleukin) in T cells by binding to the same domain than HDAC1. Interacts (when acetylated) with human CDK13, thereby increasing HIV-1 mRNA splicing and promoting the production of the doubly spliced HIV-1 protein Nef. Interacts with host TBP; this interaction modulates the activity of transcriptional pre-initiation complex. Interacts with host RELA. Interacts with host PLSCR1; this interaction negatively regulates Tat transactivation activity by altering its subcellular distribution. Asymmetrical arginine methylation by host PRMT6 seems to diminish the transactivation capacity of Tat and affects the interaction with host CCNT1. In terms of processing, acetylation by EP300, CREBBP, GCN5L2/GCN5 and PCAF regulates the transactivation activity of Tat. EP300-mediated acetylation of Lys-50 promotes dissociation of Tat from the TAR RNA through the competitive binding to PCAF's bromodomain. In addition, the non-acetylated Tat's N-terminus can also interact with PCAF. PCAF-mediated acetylation of Lys-28 enhances Tat's binding to CCNT1. Lys-50 is deacetylated by SIRT1. Post-translationally, polyubiquitination by host MDM2 does not target Tat to degradation, but activates its transactivation function and fosters interaction with CCNT1 and TAR RNA. Phosphorylated by EIF2AK2 on serine and threonine residues adjacent to the basic region important for TAR RNA binding and function. Phosphorylation of Tat by EIF2AK2 is dependent on the prior activation of EIF2AK2 by dsRNA.

It is found in the host nucleus. Its subcellular location is the host nucleolus. The protein resides in the host cytoplasm. The protein localises to the secreted. Transcriptional activator that increases RNA Pol II processivity, thereby increasing the level of full-length viral transcripts. Recognizes a hairpin structure at the 5'-LTR of the nascent viral mRNAs referred to as the transactivation responsive RNA element (TAR) and recruits the cyclin T1-CDK9 complex (P-TEFb complex) that will in turn hyperphosphorylate the RNA polymerase II to allow efficient elongation. The CDK9 component of P-TEFb and other Tat-activated kinases hyperphosphorylate the C-terminus of RNA Pol II that becomes stabilized and much more processive. Other factors such as HTATSF1/Tat-SF1, SUPT5H/SPT5, and HTATIP2 are also important for Tat's function. Besides its effect on RNA Pol II processivity, Tat induces chromatin remodeling of proviral genes by recruiting the histone acetyltransferases (HATs) CREBBP, EP300 and PCAF to the chromatin. This also contributes to the increase in proviral transcription rate, especially when the provirus integrates in transcriptionally silent region of the host genome. To ensure maximal activation of the LTR, Tat mediates nuclear translocation of NF-kappa-B by interacting with host RELA. Through its interaction with host TBP, Tat may also modulate transcription initiation. Tat can reactivate a latently infected cell by penetrating in it and transactivating its LTR promoter. In the cytoplasm, Tat is thought to act as a translational activator of HIV-1 mRNAs. Its function is as follows. Extracellular circulating Tat can be endocytosed by surrounding uninfected cells via the binding to several surface receptors such as CD26, CXCR4, heparan sulfate proteoglycans (HSPG) or LDLR. Neurons are rarely infected, but they internalize Tat via their LDLR. Through its interaction with nuclear HATs, Tat is potentially able to control the acetylation-dependent cellular gene expression. Modulates the expression of many cellular genes involved in cell survival, proliferation or in coding for cytokines or cytokine receptors. Tat plays a role in T-cell and neurons apoptosis. Tat induced neurotoxicity and apoptosis probably contribute to neuroAIDS. Circulating Tat also acts as a chemokine-like and/or growth factor-like molecule that binds to specific receptors on the surface of the cells, affecting many cellular pathways. In the vascular system, Tat binds to ITGAV/ITGB3 and ITGA5/ITGB1 integrins dimers at the surface of endothelial cells and competes with bFGF for heparin-binding sites, leading to an excess of soluble bFGF. The sequence is that of Protein Tat from Homo sapiens (Human).